The chain runs to 184 residues: uncharacterized protein (184 aa).

It belongs to the TorD/DmsD family.

This is an uncharacterized protein from Haemophilus influenzae (strain ATCC 51907 / DSM 11121 / KW20 / Rd).